We begin with the raw amino-acid sequence, 269 residues long: MNIGNMKATDVKAYISNILKSEDKSIDYEALIRTLEDDNRVTVKNLGKNVIKFLENRKKERIRVRNMYEFDKKYIKSGTYLAGADEVGRGPLAGPIVAAAVVLDLDIINDENLILRINDSKKISFEVREELSKIIKERAVSYSIQEISSEEIDEKGIAWCNNEVLKRSVCNLKVDPDLVLSDGYKIKNCTINNEFVVKGDAKSASIACASIIAKVYRDNLMIEYSKKYPEYMFNKNMGYGTKEHIEAIKKFGCTKIHRKSFLKNILNTF.

Residues Thr79–Phe269 form the RNase H type-2 domain. A divalent metal cation contacts are provided by Asp85, Glu86, and Asp182.

Belongs to the RNase HII family. The cofactor is Mn(2+). Requires Mg(2+) as cofactor.

Its subcellular location is the cytoplasm. It catalyses the reaction Endonucleolytic cleavage to 5'-phosphomonoester.. Functionally, endonuclease that specifically degrades the RNA of RNA-DNA hybrids. The polypeptide is Ribonuclease HII (Clostridium novyi (strain NT)).